The sequence spans 426 residues: Enolase (426 aa).

Gln162 provides a ligand contact to (2R)-2-phosphoglycerate. The active-site Proton donor is the Glu204. Mg(2+) is bound by residues Asp241, Glu284, and Asp311. The (2R)-2-phosphoglycerate site is built by Lys336, Arg365, Ser366, and Lys387. The active-site Proton acceptor is Lys336.

Belongs to the enolase family. Component of the RNA degradosome, a multiprotein complex involved in RNA processing and mRNA degradation. Mg(2+) serves as cofactor.

It is found in the cytoplasm. The protein localises to the secreted. The protein resides in the cell surface. The catalysed reaction is (2R)-2-phosphoglycerate = phosphoenolpyruvate + H2O. Its pathway is carbohydrate degradation; glycolysis; pyruvate from D-glyceraldehyde 3-phosphate: step 4/5. Functionally, catalyzes the reversible conversion of 2-phosphoglycerate (2-PG) into phosphoenolpyruvate (PEP). It is essential for the degradation of carbohydrates via glycolysis. The protein is Enolase of Hydrogenovibrio crunogenus (strain DSM 25203 / XCL-2) (Thiomicrospira crunogena).